Consider the following 416-residue polypeptide: Putative competence-damage inducible protein (416 aa).

Belongs to the CinA family.

The protein is Putative competence-damage inducible protein of Levilactobacillus brevis (strain ATCC 367 / BCRC 12310 / CIP 105137 / JCM 1170 / LMG 11437 / NCIMB 947 / NCTC 947) (Lactobacillus brevis).